The following is a 1057-amino-acid chain: Carbamoyl phosphate synthase large chain (1057 aa).

The carboxyphosphate synthetic domain stretch occupies residues 1–401; that stretch reads MPKRNDIKTI…SLLKAIRSLE (401 aa). ATP contacts are provided by Arg129, Arg169, Gly175, Gly176, Lys208, Ile210, Glu215, Gly241, Ile242, His243, Gln284, and Glu298. The ATP-grasp 1 domain occupies 133 to 327; sequence RTLMNDLNVP…IAKLAAKIAV (195 aa). Residues Gln284, Glu298, and Asn300 each coordinate Mg(2+). Gln284, Glu298, and Asn300 together coordinate Mn(2+). The oligomerization domain stretch occupies residues 402-546; the sequence is YGVHHLGLPN…YGTYETENES (145 aa). The tract at residues 547 to 929 is carbamoyl phosphate synthetic domain; it reads IVTDKEKILV…ALFKGLTGSG (383 aa). An ATP-grasp 2 domain is found at 671–861; it reads EALLRKINVP…MAQLAMRAII (191 aa). Residues Arg707, Arg746, Leu748, Glu752, Gly777, Val778, His779, Ser780, Gln820, and Glu832 each coordinate ATP. Mg(2+) contacts are provided by Gln820, Glu832, and Asn834. Mn(2+) is bound by residues Gln820, Glu832, and Asn834. The 128-residue stretch at 930–1057 folds into the MGS-like domain; it reads VEVKDHGTVL…ESMTFTMRQM (128 aa). The segment at 930–1057 is allosteric domain; the sequence is VEVKDHGTVL…ESMTFTMRQM (128 aa).

The protein belongs to the CarB family. Composed of two chains; the small (or glutamine) chain promotes the hydrolysis of glutamine to ammonia, which is used by the large (or ammonia) chain to synthesize carbamoyl phosphate. Tetramer of heterodimers (alpha,beta)4. The cofactor is Mg(2+). Requires Mn(2+) as cofactor.

The enzyme catalyses hydrogencarbonate + L-glutamine + 2 ATP + H2O = carbamoyl phosphate + L-glutamate + 2 ADP + phosphate + 2 H(+). The catalysed reaction is hydrogencarbonate + NH4(+) + 2 ATP = carbamoyl phosphate + 2 ADP + phosphate + 2 H(+). The protein operates within amino-acid biosynthesis; L-arginine biosynthesis; carbamoyl phosphate from bicarbonate: step 1/1. It participates in pyrimidine metabolism; UMP biosynthesis via de novo pathway; (S)-dihydroorotate from bicarbonate: step 1/3. Large subunit of the glutamine-dependent carbamoyl phosphate synthetase (CPSase). CPSase catalyzes the formation of carbamoyl phosphate from the ammonia moiety of glutamine, carbonate, and phosphate donated by ATP, constituting the first step of 2 biosynthetic pathways, one leading to arginine and/or urea and the other to pyrimidine nucleotides. The large subunit (synthetase) binds the substrates ammonia (free or transferred from glutamine from the small subunit), hydrogencarbonate and ATP and carries out an ATP-coupled ligase reaction, activating hydrogencarbonate by forming carboxy phosphate which reacts with ammonia to form carbamoyl phosphate. This Staphylococcus aureus (strain MRSA252) protein is Carbamoyl phosphate synthase large chain.